A 142-amino-acid chain; its full sequence is Large ribosomal subunit protein uL16 (142 aa).

It belongs to the universal ribosomal protein uL16 family. As to quaternary structure, part of the 50S ribosomal subunit.

In terms of biological role, binds 23S rRNA and is also seen to make contacts with the A and possibly P site tRNAs. This is Large ribosomal subunit protein uL16 from Thermosipho melanesiensis (strain DSM 12029 / CIP 104789 / BI429).